Reading from the N-terminus, the 123-residue chain is Small ribosomal subunit protein uS12 (123 aa).

The interval 1–26 is disordered; that stretch reads MPTLNQLVRKPRKRPVAKSKVPALDA. Asp89 bears the 3-methylthioaspartic acid mark. The disordered stretch occupies residues 104-123; the sequence is TAGVKNRKQSRSKYGAKRPK. Residues 108 to 123 are compositionally biased toward basic residues; it reads KNRKQSRSKYGAKRPK.

Belongs to the universal ribosomal protein uS12 family. Part of the 30S ribosomal subunit. Contacts proteins S8 and S17. May interact with IF1 in the 30S initiation complex.

Its function is as follows. With S4 and S5 plays an important role in translational accuracy. Functionally, interacts with and stabilizes bases of the 16S rRNA that are involved in tRNA selection in the A site and with the mRNA backbone. Located at the interface of the 30S and 50S subunits, it traverses the body of the 30S subunit contacting proteins on the other side and probably holding the rRNA structure together. The combined cluster of proteins S8, S12 and S17 appears to hold together the shoulder and platform of the 30S subunit. This is Small ribosomal subunit protein uS12 from Acidithiobacillus ferrooxidans (strain ATCC 23270 / DSM 14882 / CIP 104768 / NCIMB 8455) (Ferrobacillus ferrooxidans (strain ATCC 23270)).